A 104-amino-acid chain; its full sequence is L-rhamnose mutarotase (104 aa).

Tyrosine 18 lines the substrate pocket. The active-site Proton donor is the histidine 22. Substrate is bound by residues tyrosine 41 and 76–77 (WW).

This sequence belongs to the rhamnose mutarotase family. As to quaternary structure, homodimer.

The protein resides in the cytoplasm. The catalysed reaction is alpha-L-rhamnose = beta-L-rhamnose. The protein operates within carbohydrate metabolism; L-rhamnose metabolism. Its function is as follows. Involved in the anomeric conversion of L-rhamnose. This is L-rhamnose mutarotase from Lactiplantibacillus plantarum (strain ATCC BAA-793 / NCIMB 8826 / WCFS1) (Lactobacillus plantarum).